A 60-amino-acid chain; its full sequence is MRKLKMMLCVMMLPLVVVGCTSKQSVSQCVKPPRPPAWIMQPPPDWQTPLNGIISPSERG.

Positions 1–19 are cleaved as a signal peptide; that stretch reads MRKLKMMLCVMMLPLVVVG. C20 is lipidated: N-palmitoyl cysteine. C20 carries the S-diacylglycerol cysteine lipid modification.

This sequence belongs to the lambdalikevirus o-spanin family. In terms of assembly, homodimer; disulfide-linked. Interacts (via C-terminus) with RZ (via C-terminus). Part of the spanin complex which spans the entire periplasmic space. The spanin complex is composed of spanin, inner membrane subunit and spanin, outer membrane subunit.

It is found in the cell outer membrane. In terms of biological role, component of the spanin complex that disrupts the outer membrane and causes cell lysis during virus exit. The spanin complex conducts the final step in cell lysis by disrupting the outer membrane after holin and endolysin action have permeabilized the inner membrane and degraded the host peptidoglycans. The sequence is that of Prophage outer membrane lipoprotein RzoD (rzoD) from Escherichia coli (strain K12).